A 123-amino-acid polypeptide reads, in one-letter code: Small ribosomal subunit protein uS13 (123 aa).

The tract at residues P97 to K123 is disordered.

Belongs to the universal ribosomal protein uS13 family. In terms of assembly, part of the 30S ribosomal subunit. Forms a loose heterodimer with protein S19. Forms two bridges to the 50S subunit in the 70S ribosome.

Located at the top of the head of the 30S subunit, it contacts several helices of the 16S rRNA. In the 70S ribosome it contacts the 23S rRNA (bridge B1a) and protein L5 of the 50S subunit (bridge B1b), connecting the 2 subunits; these bridges are implicated in subunit movement. Contacts the tRNAs in the A and P-sites. This Ehrlichia ruminantium (strain Gardel) protein is Small ribosomal subunit protein uS13.